The sequence spans 434 residues: Cullin-like protein 5 (434 aa).

The tract at residues 1 to 34 is disordered; it reads MKRSISPDPFSSTKSPKLVHHSPDDGGAEGNPYR.

Belongs to the cullin family.

The protein is Cullin-like protein 5 of Arabidopsis thaliana (Mouse-ear cress).